The chain runs to 40 residues: Large ribosomal subunit protein bL36 (40 aa).

This sequence belongs to the bacterial ribosomal protein bL36 family.

The polypeptide is Large ribosomal subunit protein bL36 (Corynebacterium glutamicum (strain R)).